The sequence spans 612 residues: MFS siderochrome iron transporter B (612 aa).

Residues 1–86 are Cytoplasmic-facing; that stretch reads MLHVLSVGPS…GAQAGVKKIE (86 aa). The segment at 55 to 78 is disordered; the sequence is DKEAAHAPANAETNNEEANPSDGA. Residues 60 to 72 show a composition bias toward low complexity; it reads HAPANAETNNEEA. Residues 87–104 form a helical membrane-spanning segment; it reads AVTLSWTRGTAIWFLTLV. The Extracellular portion of the chain corresponds to 105–127; the sequence is NDFRLSMYTSLNAYATSSFLGHS. Residues 128-148 traverse the membrane as a helical segment; sequence LLTVINIVSYVMGGSVYIPMA. The Cytoplasmic portion of the chain corresponds to 149 to 156; the sequence is KALDLWGR. A helical membrane pass occupies residues 157–177; sequence AEGFLLMTFFCILGLILLASS. Residues 178 to 187 are Extracellular-facing; that stretch reads QNLPTYCAGQ. Residues 188–208 form a helical membrane-spanning segment; the sequence is VFYKVGFGGLSYTWNVLAADV. The Cytoplasmic portion of the chain corresponds to 209–215; that stretch reads TNLRNRG. The chain crosses the membrane as a helical span at residues 216–236; the sequence is LAFAFTSSPALISAFAGSKAA. The Extracellular segment spans residues 237–246; it reads SDLLAHSTWR. A helical membrane pass occupies residues 247 to 267; sequence WGFGMWAIILPVVALPIYGLL. Residues 268–302 are Cytoplasmic-facing; it reads AYHLRQAEKKGVLVKETRDWSITPKTVWWAIMEFD. A helical membrane pass occupies residues 303–323; it reads LPGVLLFAGGFVIFLLPFTLA. Residues 324–334 lie on the Extracellular side of the membrane; that stretch reads ATAPHGYQTDY. A helical membrane pass occupies residues 335–355; that stretch reads IIAMITLGLALIIAFGFYEML. Over 356 to 370 the chain is Cytoplasmic; sequence VAPVPFLNYKFLIDR. Residues 371–393 traverse the membrane as a helical segment; that stretch reads TVLGACLLDMTYQVSYYCYASYL. The Extracellular portion of the chain corresponds to 394 to 409; sequence PSFLQVVYELDVATAG. The helical transmembrane segment at 410–430 threads the bilayer; the sequence is YVTNTFSVVSFVFLFFAGWLI. The Cytoplasmic portion of the chain corresponds to 431–435; the sequence is RWTGR. The helical transmembrane segment at 436–456 threads the bilayer; that stretch reads FKWILWVCVPLYIFGLGLMIH. The Extracellular segment spans residues 457 to 463; it reads FRQPGGY. A helical membrane pass occupies residues 464–484; sequence IGYIVMCEIFFSVAGSVFILC. Over 485–498 the chain is Cytoplasmic; that stretch reads VQLAVLASVDHQHV. The helical transmembrane segment at 499–519 threads the bilayer; it reads AAVLALLFVMGSIGGSIGSAI. At 520–575 the chain is on the extracellular side; sequence CGAIWTSTFLSRLERNLPASAMPDLSLIYSSLPTQLSYPVGSATRTAIVEAYGYAQ. A helical membrane pass occupies residues 576 to 596; that stretch reads ARMLIAGTAFMVLGFIWVGMM. Residues 597-612 lie on the Cytoplasmic side of the membrane; sequence RNLNVKNMTQTKGNVV.

It belongs to the major facilitator superfamily.

It localises to the cell tip. It is found in the cytoplasmic vesicle membrane. The protein localises to the cell membrane. In terms of biological role, major facilitator transporter involved in triacetylfusarinine C (TAFC) uptake. Can also transport ferricrocin and coprogen, but not ferrichrysin. MirB plays a crucial role for virulence in a murine model of pulmonary aspergillosis, indicating that TAFC-mediated iron uptake plays a dominant role during infection. The polypeptide is MFS siderochrome iron transporter B (Aspergillus fumigatus (strain ATCC MYA-4609 / CBS 101355 / FGSC A1100 / Af293) (Neosartorya fumigata)).